We begin with the raw amino-acid sequence, 391 residues long: NAD(P)H-quinone oxidoreductase subunit H, chloroplastic (391 aa).

This sequence belongs to the complex I 49 kDa subunit family. As to quaternary structure, NDH is composed of at least 16 different subunits, 5 of which are encoded in the nucleus.

The protein localises to the plastid. It localises to the chloroplast thylakoid membrane. The enzyme catalyses a plastoquinone + NADH + (n+1) H(+)(in) = a plastoquinol + NAD(+) + n H(+)(out). The catalysed reaction is a plastoquinone + NADPH + (n+1) H(+)(in) = a plastoquinol + NADP(+) + n H(+)(out). In terms of biological role, NDH shuttles electrons from NAD(P)H:plastoquinone, via FMN and iron-sulfur (Fe-S) centers, to quinones in the photosynthetic chain and possibly in a chloroplast respiratory chain. The immediate electron acceptor for the enzyme in this species is believed to be plastoquinone. Couples the redox reaction to proton translocation, and thus conserves the redox energy in a proton gradient. This chain is NAD(P)H-quinone oxidoreductase subunit H, chloroplastic, found in Mesostigma viride (Green alga).